Consider the following 606-residue polypeptide: R-linalool synthase, chloroplastic (606 aa).

The N-terminal 51 residues, 1–51 (MCTIISVNHHHVAILSKPKVKLFHTKNKRSASINLPWSLSPSSSAASRPIS), are a transit peptide targeting the chloroplast. Residues Arg326, Asp363, Asp367, Arg504, and Asp507 each coordinate (2E)-geranyl diphosphate. 2 residues coordinate Mg(2+): Asp363 and Asp367. The DDXXD motif signature appears at 363 to 367 (DDVYD). Asp507, Thr511, and Glu515 together coordinate Mg(2+).

Belongs to the terpene synthase family. Tpsb subfamily. Mg(2+) serves as cofactor. Mn(2+) is required as a cofactor.

It is found in the plastid. Its subcellular location is the chloroplast. The enzyme catalyses (2E)-geranyl diphosphate + H2O = (R)-linalool + diphosphate. It participates in secondary metabolite biosynthesis; terpenoid biosynthesis. Its function is as follows. Monoterpene synthase that catalyzes the formation of (3R)-linalool from geranyl diphosphate, but not from farnesyl diphosphate or geranylgeranyl diphosphate. The chain is R-linalool synthase, chloroplastic from Mentha aquatica (Water mint).